Here is a 305-residue protein sequence, read N- to C-terminus: tRNA dimethylallyltransferase (305 aa).

8 to 15 (GPTASGKT) contacts ATP. Residue 10–15 (TASGKT) participates in substrate binding. The interaction with substrate tRNA stretch occupies residues 33-36 (DSQQ).

This sequence belongs to the IPP transferase family. Monomer. It depends on Mg(2+) as a cofactor.

It carries out the reaction adenosine(37) in tRNA + dimethylallyl diphosphate = N(6)-dimethylallyladenosine(37) in tRNA + diphosphate. Catalyzes the transfer of a dimethylallyl group onto the adenine at position 37 in tRNAs that read codons beginning with uridine, leading to the formation of N6-(dimethylallyl)adenosine (i(6)A). This Anaeromyxobacter sp. (strain K) protein is tRNA dimethylallyltransferase.